The primary structure comprises 77 residues: Thioredoxin (77 aa).

Catalysis depends on nucleophile residues Cys11 and Cys14. Cysteines 11 and 14 form a disulfide.

This sequence belongs to the glutaredoxin family.

Its function is as follows. Does not function as a glutathione-disulfide oxidoreductase in the presence of glutathione and glutathione reductase. Has low thioredoxin activity in vitro. The sequence is that of Thioredoxin from Methanothermobacter thermautotrophicus (strain ATCC 29096 / DSM 1053 / JCM 10044 / NBRC 100330 / Delta H) (Methanobacterium thermoautotrophicum).